A 154-amino-acid chain; its full sequence is MKLLSKIMIIALAASTLQACNGPGGMNKQGTGTLLGGAGGALLGSQFGKGKGQLVGVGVGALLGAVLGGQVGAGMDEQDRRIAELTSQKALETAPNGSNVEWRNPDNGNYGYVTPNKTYRNSTGQYCREYTQTVVIGGKQQKAYGNACRQPDGQ.

The signal sequence occupies residues 1–19; the sequence is MKLLSKIMIIALAASTLQA. A lipid anchor (N-palmitoyl cysteine) is attached at Cys-20. Cys-20 is lipidated: S-diacylglycerol cysteine.

It belongs to the rickettsiale 17 kDa surface antigen family.

It localises to the cell outer membrane. In Rickettsia amblyommatis (Rickettsia amblyommii), this protein is 17 kDa surface antigen (omp).